The sequence spans 311 residues: Ornithine carbamoyltransferase (311 aa).

Carbamoyl phosphate is bound by residues Gln85, Arg109, and 136 to 139 (HPCQ). Residues Asn167, Asp231, and 235 to 236 (SM) contribute to the L-ornithine site. Carbamoyl phosphate contacts are provided by residues 271-272 (CL) and Arg299.

This sequence belongs to the aspartate/ornithine carbamoyltransferase superfamily. OTCase family.

Its subcellular location is the cytoplasm. The catalysed reaction is carbamoyl phosphate + L-ornithine = L-citrulline + phosphate + H(+). It participates in amino-acid biosynthesis; L-arginine biosynthesis; L-arginine from L-ornithine and carbamoyl phosphate: step 1/3. Reversibly catalyzes the transfer of the carbamoyl group from carbamoyl phosphate (CP) to the N(epsilon) atom of ornithine (ORN) to produce L-citrulline. This chain is Ornithine carbamoyltransferase (argF), found in Geobacillus stearothermophilus (Bacillus stearothermophilus).